A 1520-amino-acid polypeptide reads, in one-letter code: Putative lipoprotein AcfD homolog (1520 aa).

The first 23 residues, 1–23, serve as a signal peptide directing secretion; that stretch reads MNKKFKYKKSLLAAILSATLLAG. 2 disordered regions span residues 22-107 and 226-247; these read AGCD…GATC and NAAT…TTPG. Residue cysteine 24 is the site of N-palmitoyl cysteine attachment. Cysteine 24 is lipidated: S-diacylglycerol cysteine. The segment covering 31–42 has biased composition (low complexity); the sequence is SSSDTPPVDSGT. The span at 51 to 77 shows a compositional bias: pro residues; sequence DPTPNPEPTPEPTPDPEPTPEPIPDPE. Residues 97-107 are compositionally biased toward polar residues; sequence GGSQRVTGATC. Residues 234–247 are compositionally biased toward low complexity; sequence STHTSPVVPVTTPG. In terms of domain architecture, Peptidase M60 spans 1081-1381; the sequence is GNMQSTGLWA…MYAQLKEWAE (301 aa). The segment at 1498-1520 is disordered; sequence DLPKPEQGPETINQVTEHKMSAE.

The protein to V.cholerae AcfD (VC_0845).

Its subcellular location is the cell inner membrane. Functionally, involved in a type II secretion system (T2SS, formerly general secretion pathway, GSP) for the export of folded proteins across the outer membrane. The sequence is that of Putative lipoprotein AcfD homolog (yghJ) from Escherichia coli (strain K12).